We begin with the raw amino-acid sequence, 100 residues long: Large ribosomal subunit protein uL23 (100 aa).

The protein belongs to the universal ribosomal protein uL23 family. Part of the 50S ribosomal subunit. Contacts protein L29, and trigger factor when it is bound to the ribosome.

Functionally, one of the early assembly proteins it binds 23S rRNA. One of the proteins that surrounds the polypeptide exit tunnel on the outside of the ribosome. Forms the main docking site for trigger factor binding to the ribosome. The polypeptide is Large ribosomal subunit protein uL23 (Lactobacillus acidophilus (strain ATCC 700396 / NCK56 / N2 / NCFM)).